A 1203-amino-acid chain; its full sequence is DNA-directed RNA polymerase subunit beta (1203 aa).

A compositionally biased stretch (basic and acidic residues) spans 1174-1195 (AAQEAKAAFEAEEAEKATKAEA). Residues 1174–1203 (AAQEAKAAFEAEEAEKATKAEATEEAAEQE) form a disordered region.

Belongs to the RNA polymerase beta chain family. As to quaternary structure, the RNAP catalytic core consists of 2 alpha, 1 beta, 1 beta' and 1 omega subunit. When a sigma factor is associated with the core the holoenzyme is formed, which can initiate transcription.

It carries out the reaction RNA(n) + a ribonucleoside 5'-triphosphate = RNA(n+1) + diphosphate. Functionally, DNA-dependent RNA polymerase catalyzes the transcription of DNA into RNA using the four ribonucleoside triphosphates as substrates. The chain is DNA-directed RNA polymerase subunit beta from Streptococcus pneumoniae (strain P1031).